Consider the following 248-residue polypeptide: Probable transcriptional regulatory protein BT_2363 (248 aa).

The protein belongs to the TACO1 family.

Its subcellular location is the cytoplasm. The protein is Probable transcriptional regulatory protein BT_2363 of Bartonella tribocorum (strain CIP 105476 / IBS 506).